The following is a 316-amino-acid chain: Glycine--tRNA ligase alpha subunit (316 aa).

This sequence belongs to the class-II aminoacyl-tRNA synthetase family. As to quaternary structure, tetramer of two alpha and two beta subunits.

It is found in the cytoplasm. It carries out the reaction tRNA(Gly) + glycine + ATP = glycyl-tRNA(Gly) + AMP + diphosphate. The protein is Glycine--tRNA ligase alpha subunit of Paracoccus denitrificans (strain Pd 1222).